We begin with the raw amino-acid sequence, 90 residues long: Probable Fe(2+)-trafficking protein (90 aa).

The protein belongs to the Fe(2+)-trafficking protein family.

Its function is as follows. Could be a mediator in iron transactions between iron acquisition and iron-requiring processes, such as synthesis and/or repair of Fe-S clusters in biosynthetic enzymes. In Aliivibrio fischeri (strain ATCC 700601 / ES114) (Vibrio fischeri), this protein is Probable Fe(2+)-trafficking protein.